The chain runs to 189 residues: Elongation factor P (189 aa).

K34 is subject to N6-(3,6-diaminohexanoyl)-5-hydroxylysine.

This sequence belongs to the elongation factor P family. Post-translationally, may be beta-lysylated on the epsilon-amino group of Lys-34 by the combined action of EpmA and EpmB, and then hydroxylated on the C5 position of the same residue by EpmC (if this protein is present). Lysylation is critical for the stimulatory effect of EF-P on peptide-bond formation. The lysylation moiety may extend toward the peptidyltransferase center and stabilize the terminal 3-CCA end of the tRNA. Hydroxylation of the C5 position on Lys-34 may allow additional potential stabilizing hydrogen-bond interactions with the P-tRNA.

Its subcellular location is the cytoplasm. It participates in protein biosynthesis; polypeptide chain elongation. Its function is as follows. Involved in peptide bond synthesis. Alleviates ribosome stalling that occurs when 3 or more consecutive Pro residues or the sequence PPG is present in a protein, possibly by augmenting the peptidyl transferase activity of the ribosome. Modification of Lys-34 is required for alleviation. The sequence is that of Elongation factor P from Buchnera aphidicola subsp. Baizongia pistaciae (strain Bp).